Reading from the N-terminus, the 186-residue chain is Small ribosomal subunit protein uS7 (186 aa).

It belongs to the universal ribosomal protein uS7 family. Part of the 30S ribosomal subunit.

Functionally, one of the primary rRNA binding proteins, it binds directly to 16S rRNA where it nucleates assembly of the head domain of the 30S subunit. Is located at the subunit interface close to the decoding center. In Methanothermobacter thermautotrophicus (strain ATCC 29096 / DSM 1053 / JCM 10044 / NBRC 100330 / Delta H) (Methanobacterium thermoautotrophicum), this protein is Small ribosomal subunit protein uS7.